A 135-amino-acid polypeptide reads, in one-letter code: Rheacalcin-1 (135 aa).

3 disulfides stabilise this stretch: Cys6-Cys17, Cys34-Cys131, and Cys106-Cys123. In terms of domain architecture, C-type lectin spans 13-132; the sequence is FRGNCYGYFR…CSERNAFICK (120 aa).

It localises to the secreted. The protein resides in the extracellular space. Its subcellular location is the extracellular matrix. In Rhea americana (Greater rhea), this protein is Rheacalcin-1.